A 398-amino-acid chain; its full sequence is Nuclear egress protein 2 (398 aa).

Residues 1–359 are Perinuclear space-facing; the sequence is MEMNKVLHQD…GPSRPQSGPW (359 aa). 2 disordered regions span residues 202-246 and 306-334; these read ALTR…PPPP and LEEH…SLER. Over residues 215–224 the composition is skewed to pro residues; it reads ASPPPPPPRH. The residue at position 216 (serine 216) is a Phosphoserine. Residues 225-240 are compositionally biased toward low complexity; it reads PSCSPTMVAAGGAAAG. Over residues 311 to 323 the composition is skewed to basic residues; the sequence is SRRRGVSTHHRHP. A helical membrane pass occupies residues 360 to 382; that stretch reads LPARFATLGPLVLALLLVLALLW. Over 383-398 the chain is Nuclear; that stretch reads RGHGQSSSPTRSAHRD.

The protein belongs to the herpesviridae NEC2 protein family. As to quaternary structure, forms a heterohexameric complex with NEC1. Interacts with host UBA7 and RNF170; this interaction promotes UBA7 proteasomal degradation. In terms of processing, phosphorylated. Phosphorylation by viral kinase UL97 at Ser-216 plays an important role for correct viral nuclear egress complex (NEC) localization.

The protein localises to the host nucleus inner membrane. Its function is as follows. Plays an essential role in virion nuclear egress, the first step of virion release from infected cell. Within the host nucleus, NEC1 interacts with the newly formed capsid through the vertexes and directs it to the inner nuclear membrane by associating with NEC2. Induces the budding of the capsid at the inner nuclear membrane as well as its envelopment into the perinuclear space. There, the NEC1/NEC2 complex promotes the fusion of the enveloped capsid with the outer nuclear membrane and the subsequent release of the viral capsid into the cytoplasm where it will reach the secondary budding sites in the host Golgi or trans-Golgi network. Inhibits host ISGylation and subsequent innate antiviral response by targeting host UBA7 for proteasomal degradation. The polypeptide is Nuclear egress protein 2 (Homo sapiens (Human)).